The sequence spans 428 residues: Histidine--tRNA ligase (428 aa).

Belongs to the class-II aminoacyl-tRNA synthetase family. In terms of assembly, homodimer.

The protein resides in the cytoplasm. The enzyme catalyses tRNA(His) + L-histidine + ATP = L-histidyl-tRNA(His) + AMP + diphosphate + H(+). The sequence is that of Histidine--tRNA ligase from Pseudomonas entomophila (strain L48).